The sequence spans 386 residues: Acetylornithine aminotransferase (386 aa).

Pyridoxal 5'-phosphate contacts are provided by residues 94–95 (GT) and Phe-121. Position 124 (Arg-124) interacts with N(2)-acetyl-L-ornithine. Pyridoxal 5'-phosphate is bound at residue 206 to 209 (DEVQ). The residue at position 235 (Lys-235) is an N6-(pyridoxal phosphate)lysine. Ser-263 serves as a coordination point for N(2)-acetyl-L-ornithine. Position 264 (Thr-264) interacts with pyridoxal 5'-phosphate.

It belongs to the class-III pyridoxal-phosphate-dependent aminotransferase family. ArgD subfamily. In terms of assembly, homodimer. Pyridoxal 5'-phosphate serves as cofactor.

It is found in the cytoplasm. The enzyme catalyses N(2)-acetyl-L-ornithine + 2-oxoglutarate = N-acetyl-L-glutamate 5-semialdehyde + L-glutamate. It participates in amino-acid biosynthesis; L-arginine biosynthesis; N(2)-acetyl-L-ornithine from L-glutamate: step 4/4. This chain is Acetylornithine aminotransferase, found in Listeria monocytogenes serovar 1/2a (strain ATCC BAA-679 / EGD-e).